An 87-amino-acid polypeptide reads, in one-letter code: uncharacterized protein (87 aa).

An N-terminal signal peptide occupies residues 1-19 (MLVLQLAVLVTAVYAFVHA). A helical transmembrane segment spans residues 51-71 (ILGFVFGVLGIVIAACAAGVY).

It to M.tuberculosis Rv0476.

The protein resides in the membrane. This is an uncharacterized protein from Mycobacterium leprae (strain TN).